Reading from the N-terminus, the 308-residue chain is Phosphoribosylaminoimidazole-succinocarboxamide synthase (308 aa).

Belongs to the SAICAR synthetase family.

It carries out the reaction 5-amino-1-(5-phospho-D-ribosyl)imidazole-4-carboxylate + L-aspartate + ATP = (2S)-2-[5-amino-1-(5-phospho-beta-D-ribosyl)imidazole-4-carboxamido]succinate + ADP + phosphate + 2 H(+). It functions in the pathway purine metabolism; IMP biosynthesis via de novo pathway; 5-amino-1-(5-phospho-D-ribosyl)imidazole-4-carboxamide from 5-amino-1-(5-phospho-D-ribosyl)imidazole-4-carboxylate: step 1/2. This is Phosphoribosylaminoimidazole-succinocarboxamide synthase from Xanthomonas euvesicatoria pv. vesicatoria (strain 85-10) (Xanthomonas campestris pv. vesicatoria).